Reading from the N-terminus, the 670-residue chain is Sodium, potassium, lithium and rubidium/H(+) antiporter (670 aa).

Transmembrane regions (helical) follow at residues 5–27 (LVVL…IPFI), 46–66 (GLHF…PLLF), 83–103 (PILL…GYTI), 105–125 (WMIP…LSPT), 156–176 (ASGL…AFSL), 182–202 (SFVF…FLII), 228–248 (FVIY…VVAG), 276–296 (IILF…IPDV), 314–334 (YILV…LFFW), 355–375 (LLIS…FSIP), and 389–409 (LILF…TVVL).

It belongs to the monovalent cation:proton antiporter 1 (CPA1) transporter (TC 2.A.36) family. Nhak (TC 2.A.36.3.2) subfamily.

The protein localises to the cell membrane. Functionally, transporter involved in the efflux of sodium, potassium, lithium and rubidium. The chain is Sodium, potassium, lithium and rubidium/H(+) antiporter (nhaK) from Bacillus subtilis (strain 168).